Consider the following 546-residue polypeptide: Chaperonin GroEL (546 aa).

ATP contacts are provided by residues T29–P32, D86–T90, G413, N476–A478, and D492. Positions R521–M546 are disordered.

This sequence belongs to the chaperonin (HSP60) family. As to quaternary structure, forms a cylinder of 14 subunits composed of two heptameric rings stacked back-to-back. Interacts with the co-chaperonin GroES.

The protein localises to the cytoplasm. The enzyme catalyses ATP + H2O + a folded polypeptide = ADP + phosphate + an unfolded polypeptide.. Its function is as follows. Together with its co-chaperonin GroES, plays an essential role in assisting protein folding. The GroEL-GroES system forms a nano-cage that allows encapsulation of the non-native substrate proteins and provides a physical environment optimized to promote and accelerate protein folding. This Tetragenococcus halophilus (Pediococcus halophilus) protein is Chaperonin GroEL.